A 176-amino-acid polypeptide reads, in one-letter code: Nucleoside triphosphate/diphosphate phosphatase (176 aa).

The active-site Proton donor is the Arg23. 6 residues coordinate Mg(2+): Asn87, Asp103, Asp105, Asp107, Asp120, and Glu123.

The protein belongs to the Ntdp family. The cofactor is Mg(2+).

The catalysed reaction is a ribonucleoside 5'-triphosphate + H2O = a ribonucleoside 5'-diphosphate + phosphate + H(+). The enzyme catalyses a ribonucleoside 5'-diphosphate + H2O = a ribonucleoside 5'-phosphate + phosphate + H(+). Its function is as follows. Has nucleoside phosphatase activity towards nucleoside triphosphates and nucleoside diphosphates. The sequence is that of Nucleoside triphosphate/diphosphate phosphatase from Bacillus velezensis (strain DSM 23117 / BGSC 10A6 / LMG 26770 / FZB42) (Bacillus amyloliquefaciens subsp. plantarum).